The primary structure comprises 425 residues: Dihydroorotase (425 aa).

Zn(2+) is bound by residues His-56 and His-58. Substrate-binding positions include 58 to 60 (HYR) and Asn-90. Residues Asp-148, His-175, and His-228 each contribute to the Zn(2+) site. Asn-274 lines the substrate pocket. Asp-301 lines the Zn(2+) pocket. Residue Asp-301 is part of the active site. Residues His-305 and 319–320 (FG) each bind substrate.

This sequence belongs to the metallo-dependent hydrolases superfamily. DHOase family. Class I DHOase subfamily. Requires Zn(2+) as cofactor.

It carries out the reaction (S)-dihydroorotate + H2O = N-carbamoyl-L-aspartate + H(+). It functions in the pathway pyrimidine metabolism; UMP biosynthesis via de novo pathway; (S)-dihydroorotate from bicarbonate: step 3/3. Functionally, catalyzes the reversible cyclization of carbamoyl aspartate to dihydroorotate. This is Dihydroorotase from Lactobacillus delbrueckii subsp. bulgaricus (strain ATCC 11842 / DSM 20081 / BCRC 10696 / JCM 1002 / NBRC 13953 / NCIMB 11778 / NCTC 12712 / WDCM 00102 / Lb 14).